The sequence spans 175 residues: RNA pyrophosphohydrolase (175 aa).

The region spanning 6 to 149 (GYRPNVGIVI…KRDVYRRVMK (144 aa)) is the Nudix hydrolase domain. Residues 38-59 (GGINPGETPEQAMYRELFEEVG) carry the Nudix box motif.

The protein belongs to the Nudix hydrolase family. RppH subfamily. The cofactor is a divalent metal cation.

In terms of biological role, accelerates the degradation of transcripts by removing pyrophosphate from the 5'-end of triphosphorylated RNA, leading to a more labile monophosphorylated state that can stimulate subsequent ribonuclease cleavage. The protein is RNA pyrophosphohydrolase of Yersinia enterocolitica serotype O:8 / biotype 1B (strain NCTC 13174 / 8081).